The chain runs to 294 residues: tRNA dimethylallyltransferase (294 aa).

10–17 lines the ATP pocket; sequence GPTAVGKT. 12–17 provides a ligand contact to substrate; that stretch reads TAVGKT. The tract at residues 35–38 is interaction with substrate tRNA; sequence DSQQ.

This sequence belongs to the IPP transferase family. Monomer. Requires Mg(2+) as cofactor.

The enzyme catalyses adenosine(37) in tRNA + dimethylallyl diphosphate = N(6)-dimethylallyladenosine(37) in tRNA + diphosphate. Its function is as follows. Catalyzes the transfer of a dimethylallyl group onto the adenine at position 37 in tRNAs that read codons beginning with uridine, leading to the formation of N6-(dimethylallyl)adenosine (i(6)A). The polypeptide is tRNA dimethylallyltransferase (Streptococcus gordonii (strain Challis / ATCC 35105 / BCRC 15272 / CH1 / DL1 / V288)).